The chain runs to 84 residues: Chymotrypsin inhibitor Ani s 6 (84 aa).

A signal peptide spans 1–22; it reads MFQSTFFLVLMVCVATARFANK. 5 disulfides stabilise this stretch: Cys25/Cys58, Cys34/Cys54, Cys38/Cys50, Cys42/Cys79, and Cys60/Cys73. In terms of domain architecture, TIL spans 25–79; it reads CPPNEEYNECGNPCQEKCDNGEPVICTYQCEHRCFCKQGYVRLTEDGECVPEEFC.

Belongs to the serine protease inhibitor-like (TIL domain-containing) family.

It is found in the secreted. Inhibits alpha-chymotrypsin, but not trypsin. The protein is Chymotrypsin inhibitor Ani s 6 of Anisakis simplex (Herring worm).